We begin with the raw amino-acid sequence, 250 residues long: Phosphoribosylaminoimidazole-succinocarboxamide synthase (250 aa).

This sequence belongs to the SAICAR synthetase family.

The enzyme catalyses 5-amino-1-(5-phospho-D-ribosyl)imidazole-4-carboxylate + L-aspartate + ATP = (2S)-2-[5-amino-1-(5-phospho-beta-D-ribosyl)imidazole-4-carboxamido]succinate + ADP + phosphate + 2 H(+). Its pathway is purine metabolism; IMP biosynthesis via de novo pathway; 5-amino-1-(5-phospho-D-ribosyl)imidazole-4-carboxamide from 5-amino-1-(5-phospho-D-ribosyl)imidazole-4-carboxylate: step 1/2. This is Phosphoribosylaminoimidazole-succinocarboxamide synthase from Synechococcus sp. (strain WH7803).